Here is a 106-residue protein sequence, read N- to C-terminus: Immunoglobulin lambda constant 6 (106 aa).

The Ig-like domain maps to 7–101; sequence PSVTLFPPSS…EGSTVEKTVA (95 aa). An intrachain disulfide couples C28 to C87.

Immunoglobulins are composed of two identical heavy chains and two identical light chains; disulfide-linked.

The protein resides in the secreted. It is found in the cell membrane. Its function is as follows. Constant region of immunoglobulin light chains. Immunoglobulins, also known as antibodies, are membrane-bound or secreted glycoproteins produced by B lymphocytes. In the recognition phase of humoral immunity, the membrane-bound immunoglobulins serve as receptors which, upon binding of a specific antigen, trigger the clonal expansion and differentiation of B lymphocytes into immunoglobulins-secreting plasma cells. Secreted immunoglobulins mediate the effector phase of humoral immunity, which results in the elimination of bound antigens. The antigen binding site is formed by the variable domain of one heavy chain, together with that of its associated light chain. Thus, each immunoglobulin has two antigen binding sites with remarkable affinity for a particular antigen. The variable domains are assembled by a process called V-(D)-J rearrangement and can then be subjected to somatic hypermutations which, after exposure to antigen and selection, allow affinity maturation for a particular antigen. The sequence is that of Immunoglobulin lambda constant 6 from Homo sapiens (Human).